The following is a 178-amino-acid chain: Large ribosomal subunit protein uL6 (178 aa).

It belongs to the universal ribosomal protein uL6 family. Part of the 50S ribosomal subunit.

Its function is as follows. This protein binds to the 23S rRNA, and is important in its secondary structure. It is located near the subunit interface in the base of the L7/L12 stalk, and near the tRNA binding site of the peptidyltransferase center. This chain is Large ribosomal subunit protein uL6, found in Symbiobacterium thermophilum (strain DSM 24528 / JCM 14929 / IAM 14863 / T).